A 111-amino-acid polypeptide reads, in one-letter code: V-type proton ATPase subunit G 2 (111 aa).

It belongs to the V-ATPase G subunit family. V-ATPase is a heteromultimeric enzyme composed of a peripheral catalytic V1 complex (components A to H) attached to an integral membrane V0 proton pore complex (components: a, c, c', c'' and d).

In terms of biological role, catalytic subunit of the peripheral V1 complex of vacuolar ATPase (V-ATPase). V-ATPase is responsible for acidifying a variety of intracellular compartments in eukaryotic cells. The chain is V-type proton ATPase subunit G 2 (VATG2) from Nicotiana tabacum (Common tobacco).